We begin with the raw amino-acid sequence, 61 residues long: Large ribosomal subunit protein bL32 (61 aa).

Basic residues predominate over residues 1–16; the sequence is MAVPKRKTSPSKRGMR. The tract at residues 1-41 is disordered; the sequence is MAVPKRKTSPSKRGMRRSADALKASTYVEDKNSGELRRPHH. Residues 28-41 are compositionally biased toward basic and acidic residues; that stretch reads VEDKNSGELRRPHH.

This sequence belongs to the bacterial ribosomal protein bL32 family.

The protein is Large ribosomal subunit protein bL32 of Rhizobium rhizogenes (strain K84 / ATCC BAA-868) (Agrobacterium radiobacter).